The sequence spans 395 residues: Aspergillopepsin-1 (395 aa).

The signal sequence occupies residues 1 to 20 (MVVFSKVTAVVVGLSTIVSA). The propeptide at 21–70 (VPVVQPRKGFTINQVARPVTNKKTVNLPAVYANALTKYGGTVPDSVKAAA) is activation peptide. In terms of domain architecture, Peptidase A1 spans 86-392 (YLTPVKVGGT…DSQGPRLGFA (307 aa)). Catalysis depends on residues Asp102 and Asp284. Cys320 and Cys355 are joined by a disulfide.

It belongs to the peptidase A1 family. As to quaternary structure, monomer.

Its subcellular location is the secreted. The catalysed reaction is Hydrolysis of proteins with broad specificity. Generally favors hydrophobic residues in P1 and P1', but also accepts Lys in P1, which leads to activation of trypsinogen. Does not clot milk.. Functionally, secreted aspartic endopeptidase that allows assimilation of proteinaceous substrates. The scissile peptide bond is attacked by a nucleophilic water molecule activated by two aspartic residues in the active site. Shows a broad primary substrate specificity. Favors hydrophobic residues at the P1 and P1' positions, but also accepts a lysine residue in the P1 position, leading to the activation of trypsinogen and chymotrypsinogen A. The chain is Aspergillopepsin-1 (pepA) from Aspergillus fumigatus (strain CBS 144.89 / FGSC A1163 / CEA10) (Neosartorya fumigata).